The sequence spans 233 residues: tRNA (guanine-N(7)-)-methyltransferase (233 aa).

S-adenosyl-L-methionine is bound by residues Glu-65, Glu-90, Asp-117, and Asp-139. Asp-139 is an active-site residue. Residues Lys-143, Asp-175, and 212-215 each bind substrate; that span reads TRYE.

It belongs to the class I-like SAM-binding methyltransferase superfamily. TrmB family.

It carries out the reaction guanosine(46) in tRNA + S-adenosyl-L-methionine = N(7)-methylguanosine(46) in tRNA + S-adenosyl-L-homocysteine. It participates in tRNA modification; N(7)-methylguanine-tRNA biosynthesis. Its function is as follows. Catalyzes the formation of N(7)-methylguanine at position 46 (m7G46) in tRNA. The polypeptide is tRNA (guanine-N(7)-)-methyltransferase (Roseobacter denitrificans (strain ATCC 33942 / OCh 114) (Erythrobacter sp. (strain OCh 114))).